A 357-amino-acid chain; its full sequence is Inner membrane protein YcfT (357 aa).

Over 1–12 (MKQKELWINQIK) the chain is Cytoplasmic. A helical membrane pass occupies residues 13 to 33 (GLCICLVVIYHSVITFYPHLT). The Periplasmic portion of the chain corresponds to 34 to 49 (TFQHPLSEVLSKCWIY). A helical membrane pass occupies residues 50 to 70 (FNLYLAPFRMPVFFFISGYLI). Topologically, residues 71 to 86 (RRYIDSVPWGNCLDKR) are cytoplasmic. A helical transmembrane segment spans residues 87–107 (IWNIFWVLALWGVVQWLALSA). At 108-135 (LNQWLAPERDLSNASNAAYADSTGEFLH) the chain is on the periplasmic side. A helical transmembrane segment spans residues 136 to 156 (GMITASTSLWYLYALIVYFVV). Residues 157–162 (CKIFSR) lie on the Cytoplasmic side of the membrane. The chain crosses the membrane as a helical span at residues 163–183 (LALPLFALFVLLSVAVNFVPT). At 184 to 196 (PWWGMNSVIRNLP) the chain is on the periplasmic side. Residues 197-217 (YYSLGAWFGATIMTCVKEVPL) form a helical membrane-spanning segment. The Cytoplasmic portion of the chain corresponds to 218 to 231 (RRHLLMASLLTVLA). Residues 232 to 252 (VGAWLFTISLLLSLVSIVVIM) form a helical membrane-spanning segment. Residues 253-310 (KLFYQYEQRFGMRSTSLLNVIGSNTIAIYTTHRILVEIFSLTLLAQMNAARWSPQVEL) are Periplasmic-facing. A helical transmembrane segment spans residues 311 to 331 (TLLLVYPFVSLFICTVAGLLV). The Cytoplasmic segment spans residues 332–357 (RKLSQRAFSDLLFSPPSLPAAVSYSR).

This sequence belongs to the acyltransferase 3 family.

It localises to the cell inner membrane. The polypeptide is Inner membrane protein YcfT (ycfT) (Escherichia coli (strain K12)).